Reading from the N-terminus, the 957-residue chain is MADPAECSIKVMCRFRPLNEAEILRGDKFIPKFKGDETVVIGQGKPYVFDRVLPPNTTQEQVYNACAKQIVKDVLEGYNGTIFAYGQTSSGKTHTMEGKLHDPQLMGIIPRIAHDIFDHIYSMDENLEFHIKVSYFEIYLDKIRDLLDVSKTNLAVHEDKNRVPYVKGCTERFVSSPEEVMDVIDEGKANRHVAVTNMNEHSSRSHSIFLINIKQENVETEKKLSGKLYLVDLAGSEKVSKTGAEGAVLDEAKNINKSLSALGNVISALAEGTKTHVPYRDSKMTRILQDSLGGNCRTTIVICCSPSVFNEAETKSTLMFGQRAKTIKNTVSVNLELTAEEWKKKYEKEKEKNKTLKNVIQHLEMELNRWRNGEAVPEDEQISAKDQKNLEPCDNTPIIDNIAPVVAGISTEEKEKYDEEISSLYRQLDDKDDEINQQSQLAEKLKQQMLDQDELLASTRRDYEKIQEELTRLQIENEAAKDEVKEVLQALEELAVNYDQKSQEVEDKTRANEQLTDELAQKTTTLTTTQRELSQLQELSNHQKKRATEILNLLLKDLGEIGGIIGTNDVKTLADVNGVIEEEFTMARLYISKMKSEVKSLVNRSKQLESAQMDSNRKMNASERELAACQLLISQHEAKIKSLTDYMQNMEQKRRQLEESQDSLSEELAKLRAQEKMHEVSFQDKEKEHLTRLQDAEEMKKALEQQMESHREAHQKQLSRLRDEIEEKQKIIDEIRDLNQKLQLEQEKLSSDYNKLKIEDQEREMKLEKLLLLNDKREQAREDLKGLEETVSRELQTLHNLRKLFVQDLTTRVKKSVELDNDDGGGSAAQKQKISFLENNLEQLTKVHKQLVRDNADLRCELPKLEKRLRATAERVKALESALKEAKENAMRDRKRYQQEVDRIKEAVRAKNMARRAHSAQIAKPIRPGHYPASSPTAVHAIRGGGGSSSNSTHYQK.

The region spanning 8–327 (SIKVMCRFRP…LMFGQRAKTI (320 aa)) is the Kinesin motor domain. The ATP site is built by glutamine 87, serine 89, serine 90, glycine 91, lysine 92, threonine 93, histidine 94, and lysine 99. The microtubule-binding stretch occupies residues 174–315 (VSSPEEVMDV…PSVFNEAETK (142 aa)). The stretch at 406-923 (VAGISTEEKE…ARRAHSAQIA (518 aa)) forms a coiled coil. A globular region spans residues 859–956 (RCELPKLEKR…GSSSNSTHYQ (98 aa)). The segment at 911-957 (KNMARRAHSAQIAKPIRPGHYPASSPTAVHAIRGGGGSSSNSTHYQK) is disordered.

This sequence belongs to the TRAFAC class myosin-kinesin ATPase superfamily. Kinesin family. Kinesin subfamily. Oligomer composed of two heavy chains and two light chains. Interacts with GRIP1 and KLC3. Interacts with TRAK1. Interacts with ZFYVE27. In terms of tissue distribution, highest expression in brain, prostate and testis, and moderate expression in kidney, small intestine and ovary.

Its subcellular location is the cytoplasm. It is found in the cytoskeleton. The protein localises to the cell projection. The protein resides in the dendrite. It catalyses the reaction ATP + H2O = ADP + phosphate + H(+). In terms of biological role, microtubule-associated force-producing protein that may play a role in organelle transport. Has ATPase activity. Involved in synaptic transmission. Mediates dendritic trafficking of mRNAs. Required for anterograde axonal transportation of MAPK8IP3/JIP3 which is essential for MAPK8IP3/JIP3 function in axon elongation. The polypeptide is Kinesin heavy chain isoform 5C (KIF5C) (Homo sapiens (Human)).